Here is a 520-residue protein sequence, read N- to C-terminus: GMP synthase [glutamine-hydrolyzing] (520 aa).

Residues 9–202 enclose the Glutamine amidotransferase type-1 domain; that stretch reads TILIIDFGSQ…VHRIVGVKPG (194 aa). Cys-86 acts as the Nucleophile in catalysis. Residues His-176 and Glu-178 contribute to the active site. The GMPS ATP-PPase domain maps to 203–395; sequence WTMGAYREQA…LGLPDSFIGR (193 aa). 230–236 serves as a coordination point for ATP; that stretch reads SGGVDSS.

Homodimer.

The catalysed reaction is XMP + L-glutamine + ATP + H2O = GMP + L-glutamate + AMP + diphosphate + 2 H(+). It participates in purine metabolism; GMP biosynthesis; GMP from XMP (L-Gln route): step 1/1. Its function is as follows. Catalyzes the synthesis of GMP from XMP. The chain is GMP synthase [glutamine-hydrolyzing] from Brucella ovis (strain ATCC 25840 / 63/290 / NCTC 10512).